The sequence spans 236 residues: Large ribosomal subunit protein uL3 (236 aa).

The disordered stretch occupies residues 139–163; that stretch reads ARDSSTTHEHHRHVGAIGQRKTPGK.

Belongs to the universal ribosomal protein uL3 family. In terms of assembly, part of the 50S ribosomal subunit. Forms a cluster with proteins L14 and L19.

Functionally, one of the primary rRNA binding proteins, it binds directly near the 3'-end of the 23S rRNA, where it nucleates assembly of the 50S subunit. The polypeptide is Large ribosomal subunit protein uL3 (Anaeromyxobacter sp. (strain Fw109-5)).